The following is a 1131-amino-acid chain: MSSLSRELVFLILQFLDEEKFKETVHKLEQESGFFFNMKYFEDEVHNGNWDEVEKYLSGFTKVDDNRYSMKIFFEIRKQKYLEALDKHDRPKAVDILVKDLKVFSTFNEELFKEITQLLTLENFRENEQLSKYGDTKSARAIMLVELKKLIEANPLFRDKLQFPTLRNSRLRTLINQSLNWQHQLCKNPRPNPDIKTLFVDHSCGPPNGARAPSPVNNPLLGGIPKAGGFPPLGAHGPFQPTASPVPTPLAGWMSSPSSVPHPAVSAGAIALGGPSIPAALKHPRTPPTNASLDYPSADSEHVSKRTRPMGISDEVNLGVNMLPMSFSGQAHGHSPAFKAPDDLPKTVARTLSQGSSPMSMDFHPIKQTLLLVGTNVGDIGLWEVGSRERLVQKTFKVWDLSKCSMPLQAALVKEPVVSVNRVIWSPDGSLFGVAYSRHIVQLYSYHGGEDMRQHLEIDAHVGGVNDISFSTPNKQLCVITCGDDKTIKVWDAATGVKRHTFEGHEAPVYSVCPHYKENIQFIFSTALDGKIKAWLYDNMGSRVDYDAPGRWCTTMAYSADGTRLFSCGTSKDGESFIVEWNESEGAVKRTYQGFHKRSLGVVQFDTTKNRYLAAGDDFSIKFWDMDAVQLLTAIDGDGGLQASPRIRFNKEGSLLAVSGNENVIKIMANSDGLRLLHTFENISSESSKPAINSIAAAAAAAATSAGHADRSANVVSIQGMNGDSRNMVDVKPVITEESNDKSKIWKLTEVSEPSQCRSLRLPENLRVAKISRLIFTNSGNAILALASNAIHLLWKWQRNERNATGKATASLPPQQWQPASGILMTNDVAETNPEEAVPCFALSKNDSYVMSASGGKISLFNMMTFKTMATFMPPPPAATFLAFHPQDNNIIAIGMDDSTIQIYNVRVDEVKSKLKGHSKRITGLAFSNVLNVLVSSGADAQLCVWNTDGWEKQRSKVLPLPQGRPNSAPSDTRVQFHQDQAHFLVVHETQLAIYETTKLECMKQWAVRESLAPITHATFSCDSQLVYASFMDATVCVFSSANLRLRCRVNPSAYLPASLSNSNVHPLVIAAHPQEPNMFAVGLSDGGVHIFEPLESEGKWGVAPPAENGSASGAPTAPSVGASASDQPQR.

A LisH domain is found at 4–36; that stretch reads LSRELVFLILQFLDEEKFKETVHKLEQESGFFF. In terms of domain architecture, CTLH spans 34–92; sequence FFFNMKYFEDEVHNGNWDEVEKYLSGFTKVDDNRYSMKIFFEIRKQKYLEALDKHDRPK. Residue S214 is modified to Phosphoserine. Residues 286–305 form a disordered region; it reads TPPTNASLDYPSADSEHVSK. WD repeat units follow at residues 353–393, 415–454, 460–501, 504–545, 548–591, 595–634, 639–678, 710–756, 766–805, 833–871, 874–914, 917–956, 967–1005, 1010–1049, and 1060–1102; these read SQGS…RLVQ, EPVVSVNRVIWSPDGSLFGVAYSRHIVQLYSYHGGEDMRQ, AHVG…KRHT, GHEA…SRVD, APGR…VKRT, FHKRSLGVVQFDTTKNRYLAAGDDFSIKFWDMDAVQLLTA, GGLQASPRIRFNKEGSLLAVSGNENVIKIMANSDGLRLLH, DRSA…EPSQ, LRVAKISRLIFTNSGNAILALASNAIHLLWKWQRNERNAT, NPEEAVPCFALSKNDSYVMSASGGKISLFNMMTFKTMAT, PPPP…VKSK, GHSKRITGLAFSNVLNVLVSSGADAQLCVWNTDGWEKQRS, NSAPSDTRVQFHQDQAHFLVVHETQLAIYETTKLECMKQ, ESLAPITHATFSCDSQLVYASFMDATVCVFSSANLRLRCR, and LSNS…GKWG. The disordered stretch occupies residues 1100–1131; sequence KWGVAPPAENGSASGAPTAPSVGASASDQPQR.

In terms of assembly, tetramer. Homodimer. Interacts (via the LisH domain) with WUS (via the C-terminal domain). Interacts with NINJA/AFPH2. Interacts with IAA1; IAA2; IAA3; IAA4; IAA6; IAA8; IAA9; IAA11; IAA13; IAA14; IAA17; IAA18; IAA26; IAA27 and IAA28. Interacts (via the LisH domain) with IAA12/BDL (via domain I). Can form a complex with IAA12 and ARF5. Interacts with AP2 (via EAR motif) and HDA19. Interacts with TIFY5A/JAZ8 (via EAR motif). Interacts with SPEAR3/TIE1. Interacts with SPL (via EAR motif). Interacts with ZAT2 and ZAT3 (via the EAR motif). Interacts with JAZ13 (via EAR motif). Interacts with GIR1 and GIR2. As to expression, expressed in embryo and in extraembryonic tissues. Expressed in inflorescences, flowers, floral meristems, developing anthers and ovules. Detected in the vascular tissues, shoot apical meristem, cotyledons and young leaves. Expressed ubiquitously in the pistils, stamens and pollens.

It is found in the nucleus. Transcriptional corepressor. May repress the expression of root-promoting genes in the top half of the embryo to allow proper differentiation of the shoot pole during the transition stage of embryogenesis. Regulates the expression of PLT1 and PLT2. Negative regulator of jasmonate responses. Negative regulator of auxin responses. Negative regulator of multiple floral organ identity genes. Required for ovule development. This chain is Protein TOPLESS (TPL), found in Arabidopsis thaliana (Mouse-ear cress).